The following is a 143-amino-acid chain: D-aminoacyl-tRNA deacylase (143 aa).

Positions 135–136 (GP) match the Gly-cisPro motif, important for rejection of L-amino acids motif.

Belongs to the DTD family. As to quaternary structure, homodimer.

It localises to the cytoplasm. The enzyme catalyses glycyl-tRNA(Ala) + H2O = tRNA(Ala) + glycine + H(+). It catalyses the reaction a D-aminoacyl-tRNA + H2O = a tRNA + a D-alpha-amino acid + H(+). In terms of biological role, an aminoacyl-tRNA editing enzyme that deacylates mischarged D-aminoacyl-tRNAs. Also deacylates mischarged glycyl-tRNA(Ala), protecting cells against glycine mischarging by AlaRS. Acts via tRNA-based rather than protein-based catalysis; rejects L-amino acids rather than detecting D-amino acids in the active site. By recycling D-aminoacyl-tRNA to D-amino acids and free tRNA molecules, this enzyme counteracts the toxicity associated with the formation of D-aminoacyl-tRNA entities in vivo and helps enforce protein L-homochirality. This chain is D-aminoacyl-tRNA deacylase, found in Mycobacterium avium (strain 104).